The sequence spans 100 residues: Integration host factor subunit alpha (100 aa).

This sequence belongs to the bacterial histone-like protein family. Heterodimer of an alpha and a beta chain.

In terms of biological role, this protein is one of the two subunits of integration host factor, a specific DNA-binding protein that functions in genetic recombination as well as in transcriptional and translational control. The sequence is that of Integration host factor subunit alpha from Jannaschia sp. (strain CCS1).